Reading from the N-terminus, the 151-residue chain is Large-conductance mechanosensitive channel (151 aa).

Transmembrane regions (helical) follow at residues 14-34 and 85-105; these read VVDMAVGIIIGGAFGALVNSL and GLFVNALIGFLIMAFAVFLLV.

This sequence belongs to the MscL family. As to quaternary structure, homopentamer.

The protein localises to the cell inner membrane. Its function is as follows. Channel that opens in response to stretch forces in the membrane lipid bilayer. May participate in the regulation of osmotic pressure changes within the cell. The sequence is that of Large-conductance mechanosensitive channel from Chlorobaculum tepidum (strain ATCC 49652 / DSM 12025 / NBRC 103806 / TLS) (Chlorobium tepidum).